The primary structure comprises 446 residues: Probable D-serine dehydratase (446 aa).

Lys116 carries the post-translational modification N6-(pyridoxal phosphate)lysine.

Belongs to the serine/threonine dehydratase family. DsdA subfamily. The cofactor is pyridoxal 5'-phosphate.

The enzyme catalyses D-serine = pyruvate + NH4(+). This chain is Probable D-serine dehydratase, found in Bacillus thuringiensis (strain Al Hakam).